A 570-amino-acid chain; its full sequence is MKINRQQYAESYGPTVGDQVRLADTDLWIEVEKDTTYGDEAVNFGGGKVLREGMGENGTYTRTENVLDLLLTNALILDYTGIYKADIGVKDGYIVGIGKGGNPDIMDGVTPNMIVGTATEVIAAEGKIVTAGGIDTHVHFINPDQVDVALANGITTLFGGGTGPAEGSKATTVTPGPWNIEKMLKSTEGLPINVGILGKGHGSSIAPIMEQIDAGAAGLKIHEDWGATPASIDRSLTVADEADVQVAIHSDTLNEAGFLEDTLRAINGRVIHSFHVEGAGGGHAPDIMAMAGHPNVLPSSTNPTRPFTVNTIDEHLDMLMVCHHLKQNIPEDVAFADSRIRPETIAAEDILHDLGIISMMSTDALAMGRAGEMVLRTWQTADKMKKQRGPLAEEKNGSDNFRAKRYVSKYTINPAIAQGIAHEVGSIEEGKFADLVLWEPKFFGVKADRVIKGGIIAYAQIGDPSASIPTPQPVMGRRMYGTVGDLIHDTNITFMSKSSIQQGVPAKLGLKRRIGTVKNCRNIGKKDMKWNDVTTDIDINPETYEVKVDGEVLTCEPVKELPMAQRYFLF.

A Urease domain is found at 132-570 (GGIDTHVHFI…LPMAQRYFLF (439 aa)). 2 residues coordinate Ni(2+): histidine 137 and histidine 139. Histidine 139 and alanine 170 together coordinate substrate. Lysine 220 is a Ni(2+) binding site. Residue lysine 220 is modified to N6-carboxylysine. 2 residues coordinate substrate: histidine 222 and histidine 249. The Ni(2+) site is built by histidine 249 and histidine 275. Residue histidine 323 is the Proton donor of the active site. A Ni(2+)-binding site is contributed by aspartate 363. A substrate-binding site is contributed by alanine 366.

This sequence belongs to the metallo-dependent hydrolases superfamily. Urease alpha subunit family. As to quaternary structure, heterotrimer of UreA (gamma), UreB (beta) and UreC (alpha) subunits. Three heterotrimers associate to form the active enzyme. It depends on Ni cation as a cofactor. In terms of processing, carboxylation allows a single lysine to coordinate two nickel ions.

The protein localises to the cytoplasm. It carries out the reaction urea + 2 H2O + H(+) = hydrogencarbonate + 2 NH4(+). The protein operates within nitrogen metabolism; urea degradation; CO(2) and NH(3) from urea (urease route): step 1/1. Its activity is regulated as follows. Inhibited by fluoride. The chain is Urease subunit alpha from Sporosarcina pasteurii (Bacillus pasteurii).